A 332-amino-acid chain; its full sequence is Glycerol-3-phosphate dehydrogenase [NAD(P)+] (332 aa).

The NADPH site is built by Ser11, Phe12, Lys32, and Lys106. Lys106, Gly137, and Ser139 together coordinate sn-glycerol 3-phosphate. An NADPH-binding site is contributed by Ala141. The sn-glycerol 3-phosphate site is built by Lys192, Asp245, Ser255, Arg256, and Asn257. Residue Lys192 is the Proton acceptor of the active site. Arg256 provides a ligand contact to NADPH. Residues Val280 and Glu282 each coordinate NADPH.

The protein belongs to the NAD-dependent glycerol-3-phosphate dehydrogenase family.

Its subcellular location is the cytoplasm. The catalysed reaction is sn-glycerol 3-phosphate + NAD(+) = dihydroxyacetone phosphate + NADH + H(+). The enzyme catalyses sn-glycerol 3-phosphate + NADP(+) = dihydroxyacetone phosphate + NADPH + H(+). The protein operates within membrane lipid metabolism; glycerophospholipid metabolism. Functionally, catalyzes the reduction of the glycolytic intermediate dihydroxyacetone phosphate (DHAP) to sn-glycerol 3-phosphate (G3P), the key precursor for phospholipid synthesis. The protein is Glycerol-3-phosphate dehydrogenase [NAD(P)+] of Staphylococcus saprophyticus subsp. saprophyticus (strain ATCC 15305 / DSM 20229 / NCIMB 8711 / NCTC 7292 / S-41).